A 218-amino-acid polypeptide reads, in one-letter code: Testis expressed protein 56 (218 aa).

The protein is Testis expressed protein 56 (Tex56) of Rattus norvegicus (Rat).